The sequence spans 315 residues: Aspartate carbamoyltransferase catalytic subunit (315 aa).

Positions 64 and 65 each coordinate carbamoyl phosphate. L-aspartate is bound at residue Lys-92. Residues Arg-114, His-142, and Gln-145 each contribute to the carbamoyl phosphate site. L-aspartate is bound by residues Arg-175 and Arg-229. Positions 270 and 271 each coordinate carbamoyl phosphate.

This sequence belongs to the aspartate/ornithine carbamoyltransferase superfamily. ATCase family. Heterododecamer (2C3:3R2) of six catalytic PyrB chains organized as two trimers (C3), and six regulatory PyrI chains organized as three dimers (R2).

The enzyme catalyses carbamoyl phosphate + L-aspartate = N-carbamoyl-L-aspartate + phosphate + H(+). It functions in the pathway pyrimidine metabolism; UMP biosynthesis via de novo pathway; (S)-dihydroorotate from bicarbonate: step 2/3. Catalyzes the condensation of carbamoyl phosphate and aspartate to form carbamoyl aspartate and inorganic phosphate, the committed step in the de novo pyrimidine nucleotide biosynthesis pathway. This chain is Aspartate carbamoyltransferase catalytic subunit, found in Methylorubrum extorquens (strain CM4 / NCIMB 13688) (Methylobacterium extorquens).